Consider the following 258-residue polypeptide: Global transcriptional regulator CodY (258 aa).

Residues 1–156 (MSSLLSKTRR…SATIVGMEML (156 aa)) are GAF domain. The segment at residues 204–223 (ASKIADKVGITRSVIVNALR) is a DNA-binding region (H-T-H motif).

The protein belongs to the CodY family.

The protein resides in the cytoplasm. Functionally, DNA-binding global transcriptional regulator which is involved in the adaptive response to starvation and acts by directly or indirectly controlling the expression of numerous genes in response to nutrient availability. During rapid exponential growth, CodY is highly active and represses genes whose products allow adaptation to nutrient depletion. The polypeptide is Global transcriptional regulator CodY (Clostridium botulinum (strain Eklund 17B / Type B)).